The sequence spans 210 residues: RNA chaperone ProQ (210 aa).

Composition is skewed to basic and acidic residues over residues 103-124 and 132-144; these read LKES…EKAK and RKAD…DKPK. The tract at residues 103–148 is disordered; that stretch reads LKESKERVFASRRTNNKEEKAKQPRRPAPRKADAAAKSDKPKAAPK.

This sequence belongs to the ProQ family.

The protein resides in the cytoplasm. Its function is as follows. RNA chaperone with significant RNA binding, RNA strand exchange and RNA duplexing activities. This is RNA chaperone ProQ from Aeromonas salmonicida (strain A449).